Consider the following 76-residue polypeptide: cAMP-dependent protein kinase inhibitor alpha (76 aa).

Thr2 bears the N-acetylthreonine mark. Residues 49-76 (KTEGEDDGQRSSTEQSGEAQGEAAKSES) are disordered.

It belongs to the PKI family. As to expression, present at high levels in skeletal muscle and brain but is present at lower levels in heart, testis and liver.

In terms of biological role, extremely potent competitive inhibitor of cAMP-dependent protein kinase activity, this protein interacts with the catalytic subunit of the enzyme after the cAMP-induced dissociation of its regulatory chains. The protein is cAMP-dependent protein kinase inhibitor alpha (Pkia) of Mus musculus (Mouse).